Consider the following 283-residue polypeptide: Protein-S-isoprenylcysteine O-methyltransferase (283 aa).

Residues 1–15 (MAAARRGSAGSEARL) lie on the Cytoplasmic side of the membrane. A helical membrane pass occupies residues 16–32 (SLATFLLGASVLALPLL). The Lumenal segment spans residues 33 to 40 (TRAGLQGR). A helical membrane pass occupies residues 41-58 (TGLALYVAGLNALLLLLY). At 59–68 (RPPRYQIAIR) the chain is on the cytoplasmic side. The helical transmembrane segment at 69 to 86 (ACFLGFVFGCGVLLSFSQ) threads the bilayer. Over 87–91 (SSWNH) the chain is Lumenal. A helical membrane pass occupies residues 92–111 (FGWYVCSLSLFHYSEYLVTA). The Cytoplasmic segment spans residues 112-130 (VNNPKSLSLDSFLLNHSLE). A helical membrane pass occupies residues 131 to 148 (YTVAALSSWIEFTLENIF). The Lumenal segment spans residues 149–153 (WPELK). A helical transmembrane segment spans residues 154–173 (QITWLSATGLLMVVFGECLR). Residues 174–211 (KAAMFTAGSNFNHVVQSEKSDTHTLVTSGVYAWCRHPS) are Cytoplasmic-facing. S-adenosyl-L-methionine is bound by residues glutamine 189, 196–199 (HTLV), tyrosine 204, and 209–212 (HPSY). Residues 212 to 227 (YVGWFYWSIGTQVMLC) traverse the membrane as a helical segment. Residue asparagine 228 is a topological domain, lumenal. A helical transmembrane segment spans residues 229-243 (PICGVVYALTVWRFF). Over 244-283 (RDRTEEEEISLIHFFGEEYLDYKKRVPTGLPFIKGVKVEL) the chain is Cytoplasmic. Arginine 246 provides a ligand contact to substrate. Glutamate 250 provides a ligand contact to S-adenosyl-L-methionine.

Belongs to the class VI-like SAM-binding methyltransferase superfamily. Isoprenylcysteine carboxyl methyltransferase family. As to expression, highly enriched in adult cerebellum, with a low level expression in other brain regions.

The protein resides in the endoplasmic reticulum membrane. The catalysed reaction is [protein]-C-terminal S-[(2E,6E)-farnesyl]-L-cysteine + S-adenosyl-L-methionine = [protein]-C-terminal S-[(2E,6E)-farnesyl]-L-cysteine methyl ester + S-adenosyl-L-homocysteine. Its function is as follows. Catalyzes the post-translational methylation of isoprenylated C-terminal cysteine residues. This chain is Protein-S-isoprenylcysteine O-methyltransferase (Icmt), found in Mus musculus (Mouse).